The following is a 311-amino-acid chain: Replicative helicase loader DnaI (311 aa).

Residues 1-136 (MEPIGRSLQG…LGATFQQVDI (136 aa)) form an N-terminal domain (Nd) region. Zn(2+) contacts are provided by Cys-67, Cys-70, His-84, and Cys-101. The interval 137–311 (SDPSRLAMFQ…RLDGENRRHP (175 aa)) is C-terminal domain (Cd). 168-175 (GKFGVGKT) contributes to the ATP binding site.

Belongs to the DnaI family. In terms of assembly, the DNA replisome assembles sequentially on oriC in this order; DnaA, DnaD, DnaB, DnaI-DnaC helicase. Monomer with a very minor amount of dimer in solution. Interacts with replicative helicase (from G.stearothermophilus, called DnaB); this interaction is disrupted by DnaD. Interacts with replicative helicase DnaC, forms a DnaC(6):DnaI(6) complex. Interacts with the helicase as 3 dimers. A stable complex with DnaG primase, DnaI(6):helicase(6):DnaG(3) fragment can be isolated; DnaI and DnaG do not contact each other (helicase and DnaG in this complex are derived from G.stearothermophilus). It depends on Zn(2+) as a cofactor.

The protein resides in the cytoplasm. The catalysed reaction is ATP + H2O = ADP + phosphate + H(+). In terms of biological role, helps load the DnaC replicative helicase onto single-stranded (ss)DNA and simulates the helicase activity; in the presence of DnaB more helicase activity is seen. Regulates DnaC helicase activity, at low concentrations stimulates the DNA helicase and ATPase activities of DnaC. Has no measurable ATPase activity after 1 hour incubation of 6 uM DnaI with or without DNA. Another group has found the protein has weak ATPase activity that is not stimulated by ssDNA. Whole protein binds forked DNA (but not ssDNA) weakly; ATP and ADPNP (probably 5'-adenylyl beta, gamma-imidodiphosphate) have no effect on DNA binding. DnaB, DnaD and DnaI may be required for a PriA-independent pathway of replication fork restart. This Bacillus subtilis (strain 168) protein is Replicative helicase loader DnaI.